The chain runs to 155 residues: 6,7-dimethyl-8-ribityllumazine synthase (155 aa).

Residues F24, 58-60 (AFE), and 82-84 (VII) contribute to the 5-amino-6-(D-ribitylamino)uracil site. 87 to 88 (ST) is a binding site for (2S)-2-hydroxy-3-oxobutyl phosphate. The active-site Proton donor is H90. F115 is a 5-amino-6-(D-ribitylamino)uracil binding site. R129 is a binding site for (2S)-2-hydroxy-3-oxobutyl phosphate.

This sequence belongs to the DMRL synthase family.

The catalysed reaction is (2S)-2-hydroxy-3-oxobutyl phosphate + 5-amino-6-(D-ribitylamino)uracil = 6,7-dimethyl-8-(1-D-ribityl)lumazine + phosphate + 2 H2O + H(+). The protein operates within cofactor biosynthesis; riboflavin biosynthesis; riboflavin from 2-hydroxy-3-oxobutyl phosphate and 5-amino-6-(D-ribitylamino)uracil: step 1/2. Functionally, catalyzes the formation of 6,7-dimethyl-8-ribityllumazine by condensation of 5-amino-6-(D-ribitylamino)uracil with 3,4-dihydroxy-2-butanone 4-phosphate. This is the penultimate step in the biosynthesis of riboflavin. In Chlorobaculum tepidum (strain ATCC 49652 / DSM 12025 / NBRC 103806 / TLS) (Chlorobium tepidum), this protein is 6,7-dimethyl-8-ribityllumazine synthase.